The sequence spans 207 residues: Guanylate kinase (207 aa).

The 180-residue stretch at 6 to 185 folds into the Guanylate kinase-like domain; that stretch reads GLLIVLSGPS…AKQRIQSIVE (180 aa). 13 to 20 contacts ATP; the sequence is GPSGVGKG.

This sequence belongs to the guanylate kinase family.

The protein localises to the cytoplasm. It carries out the reaction GMP + ATP = GDP + ADP. Its function is as follows. Essential for recycling GMP and indirectly, cGMP. This is Guanylate kinase from Staphylococcus saprophyticus subsp. saprophyticus (strain ATCC 15305 / DSM 20229 / NCIMB 8711 / NCTC 7292 / S-41).